The following is a 263-amino-acid chain: Hydroxyethylthiazole kinase (263 aa).

Met45 contributes to the substrate binding site. ATP-binding residues include Arg121 and Ser167. Substrate is bound at residue Gly194.

The protein belongs to the Thz kinase family. The cofactor is Mg(2+).

The catalysed reaction is 5-(2-hydroxyethyl)-4-methylthiazole + ATP = 4-methyl-5-(2-phosphooxyethyl)-thiazole + ADP + H(+). The protein operates within cofactor biosynthesis; thiamine diphosphate biosynthesis; 4-methyl-5-(2-phosphoethyl)-thiazole from 5-(2-hydroxyethyl)-4-methylthiazole: step 1/1. Its function is as follows. Catalyzes the phosphorylation of the hydroxyl group of 4-methyl-5-beta-hydroxyethylthiazole (THZ). This chain is Hydroxyethylthiazole kinase, found in Vibrio parahaemolyticus serotype O3:K6 (strain RIMD 2210633).